Here is an 89-residue protein sequence, read N- to C-terminus: Small ribosomal subunit protein uS15 (89 aa).

Belongs to the universal ribosomal protein uS15 family. As to quaternary structure, part of the 30S ribosomal subunit. Forms a bridge to the 50S subunit in the 70S ribosome, contacting the 23S rRNA.

Functionally, one of the primary rRNA binding proteins, it binds directly to 16S rRNA where it helps nucleate assembly of the platform of the 30S subunit by binding and bridging several RNA helices of the 16S rRNA. Forms an intersubunit bridge (bridge B4) with the 23S rRNA of the 50S subunit in the ribosome. The chain is Small ribosomal subunit protein uS15 from Vibrio parahaemolyticus serotype O3:K6 (strain RIMD 2210633).